A 1306-amino-acid polypeptide reads, in one-letter code: MQFPFACLLSTLVISGSLARASPFDFIFGNGTQQAQSQSESQGQVSFTNEASQDSSTTSLVTAYSQGVHSHQSATIVSATISSLPSTWYDASSTSQTSVSYASQESDYAVNQNSWSASTNQLPSTSTTSYYAPTFSTSADFAASSVNAASDVSTASVPIDTSANSIPFTTTSNIETTTSAPLTSDTPLISTSTMSAADNVFSSANPISASLTTTDSSESFDQTSTAGAIPVQSSADFSSSSEILVQSSADFSSPSSPTTTDISLSAAPLQTSESSSFTTASAALPVSSTDVDGSSASPVVSMSAAGQIASSSSTDNPTMSETFSLTSTEVDGSDVSSTVSALLSAPFLQTSTSNSFSIVSPSVSFVPSQSSSDVASSSTANVVSSSFSDIPPQTSTSGSVVSVAQSASALAFQSSTEVYGASASSTMSSLLSTTSLQSTTLDSSSLASSSASSSDLTDYGVSSTASIPLLSASEQASTSSSFSVVSPSVSFVPSQSSSDVASTSAPSVVSSSFSYTSLQAGGSSMTNPSSSTIVYSSSTGSSEESAASTASATLSGSSSTYMAGNLQSQPPSTSSLLSESQATSTSAVLASSSVSTTSPYTTAGGASTEASSLISSTSAETSQVSYSQSTTALQTSSFASSSTTEGSETSSQGFSTSSVLVQMPSSISSEFSPSQTTTQMNSASSSSQYTISSTGILSQVSDTSVSYTTSSSSVSQVSDTPVSYTTSSSSVSQVSDTPVSYTTSSSSVSQVSDTPVSYTTSSSSVSQVSDTPVSYTTSSSSVSQVSDTSVPSTSSRSSVSQVSDTPVPSTSSRSSVSQTSSSLQPTTTSSQRFTISTHGALSESSSVSQQASEITSSINATASEYHSIQTTAATQSTTLSFTDANSSSASAPLEVATSTPTPSSKASSLLLTPSTSSLSQVATNTNVQTSLTTESTTVLEPSTTNSSSTFSLVTSSDNNWWIPTELITQAPEAASTASSTVGGTQTMTLPHAIAAATQVPEPEGYTLITIGFKKALNYEFVVSEPKSSAQIFGYLPEALNTPFKNVFTNITVLQIVPLQDDSLNYLVSVAEVYFPTAEIEELSNLITNSSSAFYTDGMGTAKSMAAMVDSSIPLTGLLHDSNSNSGGSSDGSSSSNSNSGSSGSGSNSNSGVSSSSGNSYQDAGTLEYSSKSNSNVSTSSKSKKKIIGLVIGVVVGGCLYILFMIFAFKYIIRRRIQSQEIIKNPEISSISSSEFGGEKNYNNEKRMSVQESITQSMRIQNWMDDSYYGHGLTNNDSTPTRHNTSSSIPKISRPIASQNSLGWNEV.

An N-terminal signal peptide occupies residues 1–21; that stretch reads MQFPFACLLSTLVISGSLARA. The Extracellular segment spans residues 22–1185; sequence SPFDFIFGNG…VSTSSKSKKK (1164 aa). N-linked (GlcNAc...) asparagine glycosylation occurs at N30. Disordered regions lie at residues 248 to 267, 519 to 539, 561 to 580, 665 to 685, and 709 to 849; these read SADF…LSAA, QAGG…SSST, YMAG…LSES, SSIS…SASS, and TSSS…SVSQ. A compositionally biased stretch (polar residues) spans 519-528; that stretch reads QAGGSSMTNP. The span at 529 to 539 shows a compositional bias: low complexity; it reads SSSTIVYSSST. Composition is skewed to low complexity over residues 665–674 and 709–831; these read SSISSEFSPS and TSSS…TSSQ. 7 consecutive repeat copies span residues 698–714, 715–731, 732–748, 749–765, 766–782, 783–799, and 800–816. Residues 698–816 are 7 X 17 AA tandem repeats; the sequence is SQVSDTSVSY…VPSTSSRSSV (119 aa). Residues N859, N885, N945, N1049, and N1088 are each glycosylated (N-linked (GlcNAc...) asparagine). The segment at 1123 to 1158 is disordered; the sequence is SNSGGSSDGSSSSNSNSGSSGSGSNSNSGVSSSSGN. The N-linked (GlcNAc...) asparagine glycan is linked to N1175. A helical transmembrane segment spans residues 1186-1206; that stretch reads IIGLVIGVVVGGCLYILFMIF. Residues 1207–1306 are Cytoplasmic-facing; that stretch reads AFKYIIRRRI…SQNSLGWNEV (100 aa). Positions 1272–1291 are disordered; that stretch reads LTNNDSTPTRHNTSSSIPKI. S1300 bears the Phosphoserine mark.

This sequence belongs to the HKR1/MSB2 family. As to quaternary structure, interacts with CDC42 and SHO1. In terms of processing, O-glycosylated in the Ser/Thr-rich regions.

The protein resides in the cell membrane. Its function is as follows. Plasma membrane signaling mucin that promotes activation of the MAPK for the filamentous growth pathway. Partially redundant with the SHO1 osmosensing branch for the activation of STE11. The chain is Signaling mucin MSB2 (MSB2) from Saccharomyces cerevisiae (strain ATCC 204508 / S288c) (Baker's yeast).